Consider the following 129-residue polypeptide: Lysozyme C (129 aa).

In terms of domain architecture, C-type lysozyme spans 1-129; that stretch reads KIYTRCELAA…VSKWIKDCKL (129 aa). Disulfide bonds link Cys-6-Cys-127, Cys-30-Cys-115, Cys-64-Cys-80, and Cys-76-Cys-94. Catalysis depends on residues Glu-35 and Asp-52.

It belongs to the glycosyl hydrolase 22 family. As to quaternary structure, monomer.

It localises to the secreted. It catalyses the reaction Hydrolysis of (1-&gt;4)-beta-linkages between N-acetylmuramic acid and N-acetyl-D-glucosamine residues in a peptidoglycan and between N-acetyl-D-glucosamine residues in chitodextrins.. In terms of biological role, lysozymes have primarily a bacteriolytic function; those in tissues and body fluids are associated with the monocyte-macrophage system and enhance the activity of immunoagents. The polypeptide is Lysozyme C (LYZ) (Crax fasciolata (Bare-faced curassow)).